The sequence spans 176 residues: Xanthine-guanine phosphoribosyltransferase (176 aa).

5-phospho-alpha-D-ribose 1-diphosphate contacts are provided by residues 51 to 52 (RG), Arg88, and 111 to 119 (DDLVDSGKT). Residue Arg88 coordinates GMP. Asp112 is a binding site for Mg(2+). Asp115 and Ile158 together coordinate guanine. Xanthine contacts are provided by Asp115 and Ile158. Residues 115-119 (DSGKT) and 157-158 (WI) contribute to the GMP site.

The protein belongs to the purine/pyrimidine phosphoribosyltransferase family. XGPT subfamily. In terms of assembly, homotetramer. It depends on Mg(2+) as a cofactor.

It localises to the cell inner membrane. The catalysed reaction is GMP + diphosphate = guanine + 5-phospho-alpha-D-ribose 1-diphosphate. It carries out the reaction XMP + diphosphate = xanthine + 5-phospho-alpha-D-ribose 1-diphosphate. The enzyme catalyses IMP + diphosphate = hypoxanthine + 5-phospho-alpha-D-ribose 1-diphosphate. Its pathway is purine metabolism; GMP biosynthesis via salvage pathway; GMP from guanine: step 1/1. The protein operates within purine metabolism; XMP biosynthesis via salvage pathway; XMP from xanthine: step 1/1. In terms of biological role, purine salvage pathway enzyme that catalyzes the transfer of the ribosyl-5-phosphate group from 5-phospho-alpha-D-ribose 1-diphosphate (PRPP) to the N9 position of the 6-oxopurines guanine and xanthine to form the corresponding ribonucleotides GMP (guanosine 5'-monophosphate) and XMP (xanthosine 5'-monophosphate), with the release of PPi. To a lesser extent, also acts on hypoxanthine. This chain is Xanthine-guanine phosphoribosyltransferase, found in Ruegeria sp. (strain TM1040) (Silicibacter sp.).